The sequence spans 206 residues: MDKNSNGKLIALAVGGAVLMGALFFSVSFLTGYIPAPNHSAILTPLRSFMGWFLLIFCASIIIMGLGKMSSAISDKWFLSFPLSIFVIVMVMFLSLRVYWEKGRTTTVDGKYIRTTAELKEFLNKPAATSDVPPAPAGFDFDAAKKLVDVRCNKCHTLDSVADLFRTKYKKTGQVNLIVKRMQGFPGSGISDDDAKTIGIWLHEKF.

3 helical membrane passes run 10-30 (IALA…VSFL), 49-69 (FMGW…LGKM), and 76-96 (KWFL…FLSL). Residues Cys152, Cys155, His156, and Met182 each coordinate heme.

As to quaternary structure, monomer. Component of the photosynthetic reaction center composed of protein subunits PscA, PscC, PscB and PscD. The reaction center interacts with FmoA (which forms the Fenna-Matthews-Olson (FMO) complex). The reaction center/FmoA complex has two PscA subunits, one PscB and one PscD subunit, probably two FmoA complexes and at least one PscC subunit. Post-translationally, binds 1 heme group per subunit.

The protein localises to the cell inner membrane. In terms of biological role, monoheme cytochrome which is the immediate electron donor to P840 of the photosynthetic reaction center complex. This is Cytochrome c (pscC) from Chlorobaculum tepidum (strain ATCC 49652 / DSM 12025 / NBRC 103806 / TLS) (Chlorobium tepidum).